Consider the following 378-residue polypeptide: Alcohol dehydrogenase 1 (378 aa).

Zn(2+) is bound at residue cysteine 48. 49–53 (HTDVL) lines the NAD(+) pocket. Residues histidine 69, cysteine 99, cysteine 102, cysteine 105, cysteine 113, and cysteine 177 each coordinate Zn(2+). NAD(+) contacts are provided by residues 202 to 207 (GIGTVG), aspartate 226, lysine 231, 274 to 276 (TGV), 297 to 299 (IGA), and 321 to 323 (TTF).

It belongs to the zinc-containing alcohol dehydrogenase family. Class-IV subfamily. In terms of assembly, homodimer. Zn(2+) serves as cofactor. As to expression, expressed in flowers and disk florets.

The protein operates within isoprenoid biosynthesis. This is Alcohol dehydrogenase 1 from Tanacetum cinerariifolium (Dalmatian daisy).